The chain runs to 493 residues: Glycerol kinase (493 aa).

Residue T11 coordinates ADP. Positions 11, 12, and 13 each coordinate ATP. T11 contributes to the sn-glycerol 3-phosphate binding site. R15 is an ADP binding site. Positions 80, 81, 132, and 241 each coordinate sn-glycerol 3-phosphate. Residues R80, E81, Y132, D241, and Q242 each contribute to the glycerol site. T263 and G306 together coordinate ADP. ATP is bound by residues T263, G306, Q310, and G408. G408 serves as a coordination point for ADP.

It belongs to the FGGY kinase family.

The catalysed reaction is glycerol + ATP = sn-glycerol 3-phosphate + ADP + H(+). Its pathway is polyol metabolism; glycerol degradation via glycerol kinase pathway; sn-glycerol 3-phosphate from glycerol: step 1/1. Its activity is regulated as follows. Inhibited by fructose 1,6-bisphosphate (FBP). In terms of biological role, key enzyme in the regulation of glycerol uptake and metabolism. Catalyzes the phosphorylation of glycerol to yield sn-glycerol 3-phosphate. This is Glycerol kinase from Cereibacter sphaeroides (strain ATCC 17025 / ATH 2.4.3) (Rhodobacter sphaeroides).